We begin with the raw amino-acid sequence, 313 residues long: MTARRPTRFAKGELNVYRAPRDVTDVTRALRSTGRRVVLVPTMGALHEGHLTLIRAAKRVQGAVVVVSIFVNPLQFGAGEDLDAYPRTLDDDLAALRAEGVEIAFTPTVGDMYPDGTRTSVHPGPLGDDLEGASRPGHFAGVLTVVCKLLHIVRPDRAFFGEKDYQQLVLIRQMVTDLNIDTKIVGVPTVREADGLALSSRNRYLDEVEREQAGALSAALLAGMYAASNGAAATLDAARAVLDEVPAIEVDYLQVRDPMLGPVPHEGAARLLVAARLGQTRLLDNIAVDIGASDGIDGHPRVGSPDHQLPWRN.

43 to 50 (MGALHEGH) contributes to the ATP binding site. Residue His50 is the Proton donor of the active site. Gln75 serves as a coordination point for (R)-pantoate. Gln75 contributes to the beta-alanine binding site. 161–164 (GEKD) is a binding site for ATP. Gln167 contacts (R)-pantoate. ATP contacts are provided by residues Val190 and 198-201 (LSSR).

It belongs to the pantothenate synthetase family. As to quaternary structure, homodimer.

Its subcellular location is the cytoplasm. It carries out the reaction (R)-pantoate + beta-alanine + ATP = (R)-pantothenate + AMP + diphosphate + H(+). It functions in the pathway cofactor biosynthesis; (R)-pantothenate biosynthesis; (R)-pantothenate from (R)-pantoate and beta-alanine: step 1/1. In terms of biological role, catalyzes the condensation of pantoate with beta-alanine in an ATP-dependent reaction via a pantoyl-adenylate intermediate. The sequence is that of Pantothenate synthetase from Mycobacterium sp. (strain KMS).